Here is a 468-residue protein sequence, read N- to C-terminus: Cysteine--tRNA ligase (468 aa).

Cys33 lines the Zn(2+) pocket. Positions 35–45 match the 'HIGH' region motif; sequence ATVQGLPHIGH. Positions 211, 236, and 240 each coordinate Zn(2+). The 'KMSKS' region motif lies at 267 to 271; it reads KMSKS. Lys270 contributes to the ATP binding site.

The protein belongs to the class-I aminoacyl-tRNA synthetase family. As to quaternary structure, monomer. Zn(2+) is required as a cofactor.

The protein resides in the cytoplasm. The enzyme catalyses tRNA(Cys) + L-cysteine + ATP = L-cysteinyl-tRNA(Cys) + AMP + diphosphate. This chain is Cysteine--tRNA ligase, found in Mycolicibacterium paratuberculosis (strain ATCC BAA-968 / K-10) (Mycobacterium paratuberculosis).